We begin with the raw amino-acid sequence, 225 residues long: Ribosomal RNA small subunit methyltransferase G (225 aa).

S-adenosyl-L-methionine-binding positions include Gly62, 113–114 (AE), and Lys130.

The protein belongs to the methyltransferase superfamily. RNA methyltransferase RsmG family.

The protein localises to the cytoplasm. Functionally, specifically methylates the N7 position of a guanine in 16S rRNA. This chain is Ribosomal RNA small subunit methyltransferase G, found in Petrotoga mobilis (strain DSM 10674 / SJ95).